The chain runs to 542 residues: Protein lin-9 homolog (542 aa).

N-acetylalanine is present on A2. The segment at 2 to 296 is sufficient for interaction with RB1; sequence AELDQLPDES…QKQRPSRFFM (295 aa). K21 is covalently cross-linked (Glycyl lysine isopeptide (Lys-Gly) (interchain with G-Cter in SUMO2)). Phosphoserine occurs at positions 65 and 95. T96 and T304 each carry phosphothreonine. 2 positions are modified to phosphoserine: S309 and S321. The stretch at 354–413 forms a coiled coil; the sequence is MIKKEHIKKLREMNTEAEKLKSYSMPISIEFQRRYATIVLELEQLNKDLNKVLHKVQQYC.

The protein belongs to the lin-9 family. Component of the DREAM complex (also named LINC complex) at least composed of E2F4, E2F5, LIN9, LIN37, LIN52, LIN54, MYBL1, MYBL2, RBL1, RBL2, RBBP4, TFDP1 and TFDP2. The complex exists in quiescent cells where it represses cell cycle-dependent genes. It dissociates in S phase when LIN9, LIN37, LIN52 and LIN54 form a subcomplex that binds to MYBL2. Interacts with RB1. In terms of tissue distribution, expressed in thymus and testis.

It is found in the nucleus. The protein localises to the nucleoplasm. Acts as a tumor suppressor. Inhibits DNA synthesis. Its ability to inhibit oncogenic transformation is mediated through its association with RB1. Plays a role in the expression of genes required for the G1/S transition. This is Protein lin-9 homolog (LIN9) from Homo sapiens (Human).